Here is a 62-residue protein sequence, read N- to C-terminus: Protein UL148D (62 aa).

The helical transmembrane segment at 30-50 (WWISVAIVIFIGVCLVALMYF) threads the bilayer.

It localises to the host membrane. The protein is Protein UL148D (UL148D) of Human cytomegalovirus (strain Merlin) (HHV-5).